A 387-amino-acid chain; its full sequence is Exodeoxyribonuclease 7 large subunit (387 aa).

The protein belongs to the XseA family. In terms of assembly, heterooligomer composed of large and small subunits.

It localises to the cytoplasm. It catalyses the reaction Exonucleolytic cleavage in either 5'- to 3'- or 3'- to 5'-direction to yield nucleoside 5'-phosphates.. In terms of biological role, bidirectionally degrades single-stranded DNA into large acid-insoluble oligonucleotides, which are then degraded further into small acid-soluble oligonucleotides. In Campylobacter jejuni subsp. doylei (strain ATCC BAA-1458 / RM4099 / 269.97), this protein is Exodeoxyribonuclease 7 large subunit.